The chain runs to 433 residues: 3-phosphoshikimate 1-carboxyvinyltransferase (433 aa).

3-phosphoshikimate is bound by residues K22, S23, and R27. A phosphoenolpyruvate-binding site is contributed by K22. Phosphoenolpyruvate contacts are provided by G94 and R123. Residues S168, Q170, D319, and K346 each coordinate 3-phosphoshikimate. Phosphoenolpyruvate is bound at residue Q170. Catalysis depends on D319, which acts as the Proton acceptor. Residues R350 and R392 each contribute to the phosphoenolpyruvate site.

The protein belongs to the EPSP synthase family. As to quaternary structure, monomer.

Its subcellular location is the cytoplasm. It carries out the reaction 3-phosphoshikimate + phosphoenolpyruvate = 5-O-(1-carboxyvinyl)-3-phosphoshikimate + phosphate. It participates in metabolic intermediate biosynthesis; chorismate biosynthesis; chorismate from D-erythrose 4-phosphate and phosphoenolpyruvate: step 6/7. Catalyzes the transfer of the enolpyruvyl moiety of phosphoenolpyruvate (PEP) to the 5-hydroxyl of shikimate-3-phosphate (S3P) to produce enolpyruvyl shikimate-3-phosphate and inorganic phosphate. In Roseiflexus sp. (strain RS-1), this protein is 3-phosphoshikimate 1-carboxyvinyltransferase.